The chain runs to 364 residues: 3-dehydroquinate synthase (364 aa).

NAD(+) contacts are provided by residues 75–80, 109–113, 133–134, Lys-146, Lys-155, and 173–176; these read DGEQYK, GVIGD, TT, and TLDT. Glu-188, His-251, and His-268 together coordinate Zn(2+).

This sequence belongs to the sugar phosphate cyclases superfamily. Dehydroquinate synthase family. Co(2+) serves as cofactor. Requires Zn(2+) as cofactor. It depends on NAD(+) as a cofactor.

It is found in the cytoplasm. It carries out the reaction 7-phospho-2-dehydro-3-deoxy-D-arabino-heptonate = 3-dehydroquinate + phosphate. It functions in the pathway metabolic intermediate biosynthesis; chorismate biosynthesis; chorismate from D-erythrose 4-phosphate and phosphoenolpyruvate: step 2/7. Functionally, catalyzes the conversion of 3-deoxy-D-arabino-heptulosonate 7-phosphate (DAHP) to dehydroquinate (DHQ). The polypeptide is 3-dehydroquinate synthase (Dechloromonas aromatica (strain RCB)).